A 322-amino-acid polypeptide reads, in one-letter code: CMP-sialic acid transporter 1 (322 aa).

The Cytoplasmic portion of the chain corresponds to 1-2 (MQ). The helical transmembrane segment at 3–23 (WYLVAALLTVLTSSQGILTTL) threads the bilayer. Residues 24–33 (SQSNGKYKYD) lie on the Lumenal side of the membrane. The helical transmembrane segment at 34–54 (YATIPFLAELFKLSFSSFFLW) threads the bilayer. Residues 55-75 (KECQSSSPPRMTKEWRSIRLY) lie on the Cytoplasmic side of the membrane. A helical membrane pass occupies residues 76–96 (LVPSVIYLIHNNVQFATLTYV). At 97 to 100 (DPST) the chain is on the lumenal side. A helical membrane pass occupies residues 101-120 (YQIMGNLKIVTTGILFRLVL). Residues 121-126 (KRKLSN) lie on the Cytoplasmic side of the membrane. Residues 127–144 (LQWMAVVLLAVGTTTSQV) traverse the membrane as a helical segment. The Lumenal segment spans residues 145–157 (KGCGDAPCDSLFS). The helical transmembrane segment at 158 to 178 (APFQGYMLGILSACLSALAGV) threads the bilayer. Topologically, residues 179–198 (YTEYLMKKNNDSLYWQNVQL) are cytoplasmic. Residues 199–219 (YTFGVIFNMGWLIYGDFKAGF) form a helical membrane-spanning segment. Over 220–233 (ERGPWWQRLFNGYS) the chain is Lumenal. Residues 234–254 (ITTWMVVFNLGSTGLLVSWLM) traverse the membrane as a helical segment. Residues 255–262 (KYSDNIVK) are Cytoplasmic-facing. Residues 263–283 (VYSTSMAMLLTMVLSVYLFNV) traverse the membrane as a helical segment. At 284–286 (RAT) the chain is on the lumenal side.

This sequence belongs to the nucleotide-sugar transporter family. CMP-Sialate:CMP antiporter (TC 2.A.7.12) subfamily. In terms of tissue distribution, expressed in roots, leaves and stalks.

Its subcellular location is the golgi apparatus membrane. Functionally, sugar transporter involved in the transport of CMP-sialic acid from the cytoplasm into the Golgi. May transport important nucleotide sugars such as CMP-Kdo (2-keto-3-deoxy-D-manno-octulosonic acid) in physiological conditions. In Oryza sativa subsp. japonica (Rice), this protein is CMP-sialic acid transporter 1.